The following is a 188-amino-acid chain: Elongation factor P (188 aa).

It belongs to the elongation factor P family.

Its subcellular location is the cytoplasm. It participates in protein biosynthesis; polypeptide chain elongation. Functionally, involved in peptide bond synthesis. Stimulates efficient translation and peptide-bond synthesis on native or reconstituted 70S ribosomes in vitro. Probably functions indirectly by altering the affinity of the ribosome for aminoacyl-tRNA, thus increasing their reactivity as acceptors for peptidyl transferase. This chain is Elongation factor P, found in Anaplasma phagocytophilum (strain HZ).